The primary structure comprises 152 residues: Large-conductance mechanosensitive channel (152 aa).

3 helical membrane passes run 14–34, 39–59, and 85–105; these read VVDM…VKSL, LMPG…FLVI, and GLFI…FLVI.

This sequence belongs to the MscL family. As to quaternary structure, homopentamer.

Its subcellular location is the cell inner membrane. Functionally, channel that opens in response to stretch forces in the membrane lipid bilayer. May participate in the regulation of osmotic pressure changes within the cell. The sequence is that of Large-conductance mechanosensitive channel from Syntrophus aciditrophicus (strain SB).